We begin with the raw amino-acid sequence, 311 residues long: Ribosomal RNA small subunit methyltransferase H (311 aa).

S-adenosyl-L-methionine contacts are provided by residues glycine 41–histidine 43, aspartate 61, phenylalanine 85, aspartate 102, and glutamine 109.

It belongs to the methyltransferase superfamily. RsmH family.

The protein localises to the cytoplasm. It catalyses the reaction cytidine(1402) in 16S rRNA + S-adenosyl-L-methionine = N(4)-methylcytidine(1402) in 16S rRNA + S-adenosyl-L-homocysteine + H(+). In terms of biological role, specifically methylates the N4 position of cytidine in position 1402 (C1402) of 16S rRNA. The sequence is that of Ribosomal RNA small subunit methyltransferase H from Paracidovorax citrulli (strain AAC00-1) (Acidovorax citrulli).